Consider the following 283-residue polypeptide: MSAITEAGSSKFIDVTEGEINGSIHVNDAGNGDEVVVMFHGSGPGASGWSNFHRNVDAFVDAGYRVLLIDSPGFNKSYPIVTKSRDGAYAQAAKGVMDKLGIKRAHMIGNSMGGATAMRMAVDYPEMVGKLVMMGGGSVGGSTTTPMPTEGLKLLQGLYRNPSMENLRKMLDIFVYAPSTLTEELINGRFENMMRRPEHLTNFVESLKASGGRANYAHLLPTLTMPTMIIWGRDDRFVPLDLGLRMLWGMPDAELHVFSKCGHWAQWEHADKFNQLVLNFLAR.

An AB hydrolase-1 domain is found at 35–269 (VVVMFHGSGP…KCGHWAQWEH (235 aa)). H263 functions as the Proton acceptor in the catalytic mechanism.

Belongs to the AB hydrolase superfamily. MhpC family. Homodimer.

The catalysed reaction is (2Z,4E)-2-hydroxy-6-oxonona-2,4-dienedioate + H2O = (2Z)-2-hydroxypenta-2,4-dienoate + succinate + H(+). The enzyme catalyses (2Z,4E,7E)-2-hydroxy-6-oxonona-2,4,7-trienedioate + H2O = (2Z)-2-hydroxypenta-2,4-dienoate + fumarate + H(+). The protein operates within aromatic compound metabolism; 3-phenylpropanoate degradation. Catalyzes the cleavage of the C5-C6 bond of 2-hydroxy-6-oxononadienedioate and 2-hydroxy-6-oxononatrienedioate, a dienol ring fission product of the bacterial meta-cleavage pathway for degradation of phenylpropionic acid. In Pseudomonas sp, this protein is 2-hydroxy-6-oxononadienedioate/2-hydroxy-6-oxononatrienedioate hydrolase.